The primary structure comprises 471 residues: Ribosome biogenesis protein YTM1 (471 aa).

The ubiquitin-like (UBL) domain stretch occupies residues 10–92; the sequence is VTARFTTRDE…ETRLEVEYTR (83 aa). WD repeat units lie at residues 119 to 158, 165 to 203, and 210 to 249; these read SRAGAWSGGSVQSGQERILSASYDGLVRVWNTSGDVLATS, GRITSLKSAKWLSDKKIVAAGMDNTVRVFKYDEDTRTIT, and SHRWGVEDVAVHGPSSRILSASSDNTISLFSSNAKENPVA. Residues 245 to 274 form a disordered region; it reads ENPVAPSSLLPNSTAASNKRQKLSKPDRTV. The segment covering 253–262 has biased composition (polar residues); sequence LLPNSTAASN. WD repeat units follow at residues 285 to 325, 327 to 366, 372 to 412, and 436 to 471; these read GHSS…CVDT, TTGHSLLSLCAIPSRNLIATGTSARHITLIDPRVSATQIS, GHKN…TGGQ, and GHGEGVKVFGVRWDKDVGIVSGGEDKKIQINRALGS. The segment at 412 to 440 is disordered; the sequence is QVGEGQQGESVHTIHRQGQSGPGKGHGEG.

Belongs to the WD repeat WDR12/YTM1 family. As to quaternary structure, component of the NOP7 complex, composed of ERB1, NOP7 and YTM1. The complex is held together by ERB1, which interacts with NOP7 via its N-terminal domain and with YTM1 via a high-affinity interaction between the seven-bladed beta-propeller domains of the 2 proteins. The NOP7 complex associates with the 66S pre-ribosome. Interacts (via UBL domain) with MDN1 (via VWFA/MIDAS domain).

The protein localises to the nucleus. It localises to the nucleolus. It is found in the nucleoplasm. Component of the NOP7 complex, which is required for maturation of the 25S and 5.8S ribosomal RNAs and formation of the 60S ribosome. The polypeptide is Ribosome biogenesis protein YTM1 (Phaeosphaeria nodorum (strain SN15 / ATCC MYA-4574 / FGSC 10173) (Glume blotch fungus)).